Here is a 20-residue protein sequence, read N- to C-terminus: Phenol-soluble modulin alpha 4 peptide (20 aa).

This sequence belongs to the phenol-soluble modulin alpha peptides family.

In terms of biological role, peptide which can recruit, activate and subsequently lyse neutrophils, thus eliminating the main cellular defense against infection. This chain is Phenol-soluble modulin alpha 4 peptide (psmA4), found in Staphylococcus aureus (strain bovine RF122 / ET3-1).